Consider the following 188-residue polypeptide: MDNLQTYKLRLLDKYVLNKCMSLNRSNTSTIALDHVNIKMNYRKKKKEVYQMIELITLFEQITGEKPLIKLNESTEKNNVVKLEDFKLAVRLHKQKAKYFLNALCYVGLGERKYLTLKEENNIDLAQLKLSYRYKNLKIFRPILIRKDMNLEARLAIDIQYKTIGINNGQLTKYKFYLWKKNEFRITE.

The L5-specific motif signature appears at 62-77; the sequence is ITGEKPLIKLNESTEK.

Its subcellular location is the mitochondrion. This is an uncharacterized protein from Dictyostelium discoideum (Social amoeba).